Here is a 1874-residue protein sequence, read N- to C-terminus: MIFQSFLLGNLVSLCMKIINSVVVVGLYYGFLTTFSIGPSYLFLLRARVMEEGTEKKVSATTGFITGQLMMFISIYYAPLHLALGRPHTITVLALPYLLFHFFWNNHKHFFDYGSTTRNLMRNLSIQCVFLNNLIFQLFNYFILPSSMLARLVNIYIFRCNNKMLFVTSSFVGWLIGHILFMKWLGLVLVWIRQNHSIRSNKYIRSNKYLVSELRIFMARIFSILLFITCVYYLGRIPSPILTKKLKETSKTEEGVESEEEGDVEIETTSEMKGTKQEQEGSTEEDPSSSLFSEEKEDSNKIDETEEIRVNGKEKTKDEFHFHFTETGYNNIPFYDYEDSYLNMNGNQENWKLKDKKAAKRKELFRFEKTLVTTLFDYNRWNHPFRYIKNDRFEKALRKEMSQYFFQIYESNGKQRISFTYLPSLATFGEMIKRKISLYTLEKSSSNEFDKRWVYTNKQKIKNLNNEFRNRIQALDKEFLFLDILEARTRLCNDDTKNEYFPKMYDPFLKGAYRGRIKTILSPSKTAIDNLRDTIGINRIHSILLPDINIDYQEFEQKANLFDKKQLLTEMGNFLPLAGEFDIEQKSNLNMKGLSLFSDQDQEKIDFEKERKIFKFLLNVIRTYPIDQKIQKESVGIKEIIKKVPRWSYKLITDLEQQSGEHQENVPVDHQIRSRKAKRVVIFTDNKENTDPNKDNDTSDQRNEVALIRYSQQSDFRRRIIKGSMRAQRRKIVIWELFQANVHSPLFLDRIKKSPRFSFDISVLIKLLFRNWTGKGAKFEILEYTDEETKKEDKKEKDKKEENKRKEQARIEIAEAWDTIPFAQVIRGSMLISQSFFRKYIRLPVLIIGKNIVRMILFQFPEWSEDLEGWNREMHIKCTYNGVQLSETEFPKNWLTDGIQIKILFPFCLKPWHRSKRRPSHRDLMKKKKQKDDFCFLTVWGMETELPFGSPRKQSSFFEPAVKELETKIIKFKRAYFLALKVLKRKTKLLLRVSKETKKWIIESFLFLKRLIKELSKLNPIILFRFREVYESNETKNEKDSIISNQIIHESFSKINSPNWTNSSLTEKKKKDMSHRTSTIRNQIERIIKEKKKITPTPRIYISPNKRNWNTKRLELPKNIWQILKKRNARLFSKFNSFIKIFVERIYIDIFLFIINITRLNTQLFIESIKKIMDKSINKANKERINKKNQNTIYFISTIKKSIDTINNKTNSYIFCDLSYLSQAYVFYKLSQTKVSNLYKLRSFFHYLGTSFFLKTEIKHSFEKQGIIQNELSLKKLPSYGMDQWKGWLKGHYQYDLPSIRWSKLISEKWRNRVNQHHMAQNQNFKLNSYEKGHYKKQKDSEVYSLLNQKENFQKNSRYDLLSYKYINYQKMRDPSIYESPFQVQVNKNQDFYYNSNTYKHNLFDMLESIPINPYLVKGNIRYMEKNTDRKYFDWKIIKFFLRKRVDIESWVKINTKSNQNTKIGTNNYQIIDKIDKKGPFYLLLPQNPKINSPSPKKLFLDWMGMNEEILNRPISSLEFWFFPEFVLLYNLYKMKPWVIPSKVLLFNLNLNENVISNNKNVDGKQKTECVIPSNKQIKNKNQNQKEKETPADQEDLRSDAQKQGNLGSVPPTKTKQEKDNEEDYAVSKIKAGKKKKQYKSKTEAELDFFLKRYLVFQLRWGDALNQRMINNVKIYCLLLRLINPRKITISSIQRREMSLDIMLIQKNLSLTELIKRGVLVIEPDRLSVKNDGQFIMYQILGISVVHKNKHQTNQGYREQTYVDKNRFDLLVPENILSTRCRRELRILICFTSKNRNSVDKNSVFCTKNNSSQLLDKRKDLDKDKKELIKLKFFLWPNYRLEDLACMNRYWFDTNNGSRFSMLRIYMYPRLKSH.

6 helical membrane passes run 18–38, 64–84, 87–107, 124–144, 172–192, and 221–241; these read IINS…FSIG, FITG…HLAL, PHTI…WNNH, LSIQ…YFIL, VGWL…LVWI, and IFSI…PSPI. Disordered stretches follow at residues 248-310 and 1567-1624; these read ETSK…EIRV and KTEC…NEED. The span at 255 to 268 shows a compositional bias: acidic residues; it reads GVESEEEGDVEIET. Basic and acidic residues-rich tracts occupy residues 298-310 and 1584-1601; these read DSNK…EIRV and NQKE…RSDA.

It belongs to the TIC214 family. As to quaternary structure, part of the Tic complex.

It is found in the plastid. The protein resides in the chloroplast inner membrane. Its function is as follows. Involved in protein precursor import into chloroplasts. May be part of an intermediate translocation complex acting as a protein-conducting channel at the inner envelope. The chain is Protein TIC 214 from Coffea arabica (Arabian coffee).